A 100-amino-acid polypeptide reads, in one-letter code: Biogenesis of lysosome-related organelles complex 1 subunit CNL1 (100 aa).

A coiled-coil region spans residues 25 to 46; sequence SDRVKSLELEATRLVQRQNELV.

Belongs to the BLOC1S4 family. Component of the biogenesis of lysosome-related organelles complex-1 (BLOC-1).

The protein localises to the cytoplasm. In terms of biological role, component of the biogenesis of lysosome-related organelles complex-1 (BLOC-1), a complex that is involved in endosomal cargo sorting. The polypeptide is Biogenesis of lysosome-related organelles complex 1 subunit CNL1 (CLN1) (Candida glabrata (strain ATCC 2001 / BCRC 20586 / JCM 3761 / NBRC 0622 / NRRL Y-65 / CBS 138) (Yeast)).